Consider the following 58-residue polypeptide: Short neurotoxin MS11 (58 aa).

Cystine bridges form between Cys3–Cys20, Cys13–Cys38, Cys42–Cys50, and Cys51–Cys56.

It belongs to the three-finger toxin family. Short-chain subfamily. In terms of tissue distribution, expressed by the venom gland.

The protein localises to the secreted. In terms of biological role, produces peripheral paralysis by blocking neuromuscular transmission at the postsynaptic site. Binds to and inhibits the endogenous nicotinic acetylcholine receptors (nAChR) in the human rhabdomyosarcoma TE 671 cell line with an IC(50) of 266 mM. Not toxic to mice by intraperitoneal injection or to zebrafish by injection at the back dorsolateral region. In Micrurus surinamensis (Surinam coral snake), this protein is Short neurotoxin MS11.